The sequence spans 967 residues: Importin-alpha re-exporter (967 aa).

Residues 20-95 form the Importin N-terminal domain; it reads AEEALKVWEL…KREIINLMLK (76 aa).

This sequence belongs to the XPO2/CSE1 family. Binds with high affinity to importin-alpha only in the presence of RanGTP.

Its subcellular location is the cytoplasm. The protein resides in the nucleus envelope. Its function is as follows. Export receptor for importin alpha. Mediates importin-alpha re-export from the nucleus to the cytoplasm after import substrates have been released into the nucleoplasm. The chain is Importin-alpha re-exporter (kap109) from Schizosaccharomyces pombe (strain 972 / ATCC 24843) (Fission yeast).